The chain runs to 1372 residues: DNA-directed RNA polymerase subunit beta' (1372 aa).

Positions 69, 71, 84, and 87 each coordinate Zn(2+). Mg(2+) is bound by residues Asp-460, Asp-462, and Asp-464. Residues Cys-808, Cys-882, Cys-889, and Cys-892 each contribute to the Zn(2+) site.

This sequence belongs to the RNA polymerase beta' chain family. As to quaternary structure, the RNAP catalytic core consists of 2 alpha, 1 beta, 1 beta' and 1 omega subunit. When a sigma factor is associated with the core the holoenzyme is formed, which can initiate transcription. The cofactor is Mg(2+). Requires Zn(2+) as cofactor.

The enzyme catalyses RNA(n) + a ribonucleoside 5'-triphosphate = RNA(n+1) + diphosphate. Its function is as follows. DNA-dependent RNA polymerase catalyzes the transcription of DNA into RNA using the four ribonucleoside triphosphates as substrates. The polypeptide is DNA-directed RNA polymerase subunit beta' (Rickettsia typhi (strain ATCC VR-144 / Wilmington)).